The sequence spans 84 residues: Putative defensin-like protein 38 (84 aa).

Positions 1–26 (MASSKNGTVLFVSLMILLLISTGVKA) are cleaved as a signal peptide. Cystine bridges form between cysteine 28–cysteine 84, cysteine 41–cysteine 65, cysteine 50–cysteine 76, and cysteine 54–cysteine 78.

The protein belongs to the DEFL family.

It localises to the secreted. The polypeptide is Putative defensin-like protein 38 (Arabidopsis thaliana (Mouse-ear cress)).